The following is a 327-amino-acid chain: MKPGFSPRGGGFGGRGGFGDRGGRGGGRGGRGGFGGGRGGFGGGGRGRGGGGGGFRGRGGGGGRGGGFQSGGNRGRGGGRGGKRGNQSGKNVMVEPHRHEGVFICRGKEDALVTKNLVPGESVYGEKRVSISEGDDKIEYRAWNPFRSKLAAAILGGVDQIHIKPGAKVLYLGAASGTTVSHVSDIVGPDGLVYAVEFSHRSGRDLINLAKKRTNIIPVIEDARHPHKYRMLIAMVDVIFADVAQPDQTRIVALNAHTFLRNGGHFVISIKANCIDSTASAEAVFASEVKKMQQENMKPQEQLTLEPYERDHAVVVGVYRPPPKVKN.

Residues M1–E95 are disordered. A compositionally biased stretch (gly residues) spans P7–R80. R8, R15, R21, R24, R28, and R31 each carry asymmetric dimethylarginine. Glycyl lysine isopeptide (Lys-Gly) (interchain with G-Cter in SUMO2) cross-links involve residues K90, K108, and K115. N6-acetyllysine is present on K108. S122 carries the post-translational modification Phosphoserine. K127 carries the post-translational modification N6-acetyllysine. A phosphoserine mark is found at S130 and S132. Residues K137, K149, and K164 each participate in a glycyl lysine isopeptide (Lys-Gly) (interchain with G-Cter in SUMO2) cross-link. S-adenosyl-L-methionine contacts are provided by residues T178–T179 and E197–F198. An N6-acetyllysine mark is found at K211 and K212. S-adenosyl-L-methionine contacts are provided by residues D222 to A223 and D242 to Q245.

This sequence belongs to the methyltransferase superfamily. Fibrillarin family. In terms of assembly, component of box C/D small nucleolar ribonucleoprotein (snoRNP) particles that contain SNU13, FBL, NOP5 and NOP56, plus a guide RNA. It is associated with the U3, U8, U13, X and Y small nuclear RNAs. Component of several ribosomal and nucleolar protein complexes. Part of the small subunit (SSU) processome, composed of more than 70 proteins and the RNA chaperone small nucleolar RNA (snoRNA) U3. Interacts with PRMT5 and UTP20. Interacts with DDX5 and C1QBP. Interacts with NOL11. Interacts with PIH1D1. Interacts with RRP1B. Interacts with NOLC1. Interacts with SDE2. Interacts with NOP2 and NOP56. By homology to other fibrillarins, some or all of the N-terminal domain arginines are modified to asymmetric dimethylarginine (DMA). In terms of processing, ubiquitinated. Ubiquitination leads to proteasomal degradation. Deubiquitinated by USP36. Post-translationally, acetylated by CREBBP/CBP, preventing methylation of 'Gln-105' of histone H2A (H2AQ104me), without affecting rRNA methylation. Deacetylation by SIRT7 restores methylation of 'Gln-105' of histone H2A (H2AQ104me).

Its subcellular location is the nucleus. It localises to the nucleolus. The protein localises to the nucleoplasm. The catalysed reaction is L-glutaminyl-[histone H2A] + S-adenosyl-L-methionine = N(5)-methyl-L-glutaminyl-[histone H2A] + S-adenosyl-L-homocysteine + H(+). It catalyses the reaction a ribonucleotide in rRNA + S-adenosyl-L-methionine = a 2'-O-methylribonucleotide in rRNA + S-adenosyl-L-homocysteine + H(+). It carries out the reaction a ribonucleotide in U6 snRNA + S-adenosyl-L-methionine = a 2'-O-methylribonucleotide in U6 snRNA + S-adenosyl-L-homocysteine + H(+). Its function is as follows. S-adenosyl-L-methionine-dependent methyltransferase that has the ability to methylate both RNAs and proteins. Involved in pre-rRNA processing by catalyzing the site-specific 2'-hydroxyl methylation of ribose moieties in pre-ribosomal RNA. Site specificity is provided by a guide RNA that base pairs with the substrate. Methylation occurs at a characteristic distance from the sequence involved in base pairing with the guide RNA. Probably catalyzes 2'-O-methylation of U6 snRNAs in box C/D RNP complexes. U6 snRNA 2'-O-methylation is required for mRNA splicing fidelity. Also acts as a protein methyltransferase by mediating methylation of 'Gln-105' of histone H2A (H2AQ104me), a modification that impairs binding of the FACT complex and is specifically present at 35S ribosomal DNA locus. Part of the small subunit (SSU) processome, first precursor of the small eukaryotic ribosomal subunit. During the assembly of the SSU processome in the nucleolus, many ribosome biogenesis factors, an RNA chaperone and ribosomal proteins associate with the nascent pre-rRNA and work in concert to generate RNA folding, modifications, rearrangements and cleavage as well as targeted degradation of pre-ribosomal RNA by the RNA exosome. This chain is rRNA 2'-O-methyltransferase fibrillarin, found in Mus musculus (Mouse).